The primary structure comprises 584 residues: tRNA-guanine(15) transglycosylase (584 aa).

The Nucleophile role is filled by aspartate 95. Positions 130 and 196 each coordinate substrate. Cysteine 279, cysteine 281, and cysteine 284 together coordinate Zn(2+). The PUA domain occupies 507–582 (RMRVVVSEEA…RAVKVRRGIS (76 aa)).

This sequence belongs to the archaeosine tRNA-ribosyltransferase family. The cofactor is Zn(2+).

It catalyses the reaction guanosine(15) in tRNA + 7-cyano-7-deazaguanine = 7-cyano-7-carbaguanosine(15) in tRNA + guanine. Its pathway is tRNA modification; archaeosine-tRNA biosynthesis. Functionally, exchanges the guanine residue with 7-cyano-7-deazaguanine (preQ0) at position 15 in the dihydrouridine loop (D-loop) of archaeal tRNAs. In Pyrococcus abyssi (strain GE5 / Orsay), this protein is tRNA-guanine(15) transglycosylase.